A 239-amino-acid chain; its full sequence is Ribosomal RNA small subunit methyltransferase G (239 aa).

Residues G77, F82, 128-129 (AE), and R146 contribute to the S-adenosyl-L-methionine site. A disordered region spans residues 217-239 (RRQTSKKYPRKPGTPNKSPLVES).

It belongs to the methyltransferase superfamily. RNA methyltransferase RsmG family.

It is found in the cytoplasm. Its function is as follows. Specifically methylates the N7 position of guanine in position 535 of 16S rRNA. The chain is Ribosomal RNA small subunit methyltransferase G from Staphylococcus epidermidis (strain ATCC 12228 / FDA PCI 1200).